We begin with the raw amino-acid sequence, 161 residues long: Phosphopantetheine adenylyltransferase (161 aa).

Ser-10 is a binding site for substrate. ATP-binding positions include 10–11 (SF) and His-18. Substrate-binding residues include Lys-42, Ala-75, and Arg-89. Residues 90 to 92 (GLR), Glu-100, and 125 to 131 (LSPISSS) each bind ATP.

This sequence belongs to the bacterial CoaD family. Homohexamer. Mg(2+) serves as cofactor.

It localises to the cytoplasm. It catalyses the reaction (R)-4'-phosphopantetheine + ATP + H(+) = 3'-dephospho-CoA + diphosphate. It functions in the pathway cofactor biosynthesis; coenzyme A biosynthesis; CoA from (R)-pantothenate: step 4/5. Its function is as follows. Reversibly transfers an adenylyl group from ATP to 4'-phosphopantetheine, yielding dephospho-CoA (dPCoA) and pyrophosphate. The chain is Phosphopantetheine adenylyltransferase from Streptococcus agalactiae serotype III (strain NEM316).